A 309-amino-acid chain; its full sequence is Ribosomal RNA large subunit methyltransferase F (309 aa).

The protein belongs to the methyltransferase superfamily. METTL16/RlmF family.

It localises to the cytoplasm. It catalyses the reaction adenosine(1618) in 23S rRNA + S-adenosyl-L-methionine = N(6)-methyladenosine(1618) in 23S rRNA + S-adenosyl-L-homocysteine + H(+). In terms of biological role, specifically methylates the adenine in position 1618 of 23S rRNA. This chain is Ribosomal RNA large subunit methyltransferase F, found in Cronobacter sakazakii (strain ATCC BAA-894) (Enterobacter sakazakii).